A 170-amino-acid polypeptide reads, in one-letter code: Cytochrome b6-f complex subunit 4 (170 aa).

3 consecutive transmembrane segments (helical) span residues 36-56 (LLYIFPVVILGTIACNVGLAV), 95-115 (LLGVLLMVSVPAGLLTVPFLE), and 131-151 (TVFLIGTAVALWLGIGATLPI).

This sequence belongs to the cytochrome b family. PetD subfamily. In terms of assembly, the 4 large subunits of the cytochrome b6-f complex are cytochrome b6, subunit IV (17 kDa polypeptide, petD), cytochrome f and the Rieske protein, while the 4 small subunits are petG, petL, petM and petN. The complex functions as a dimer.

It is found in the plastid. The protein resides in the chloroplast thylakoid membrane. Functionally, component of the cytochrome b6-f complex, which mediates electron transfer between photosystem II (PSII) and photosystem I (PSI), cyclic electron flow around PSI, and state transitions. The polypeptide is Cytochrome b6-f complex subunit 4 (Nymphaea alba (White water-lily)).